A 354-amino-acid chain; its full sequence is Uroporphyrinogen decarboxylase (354 aa).

Residues 27 to 31, F46, D77, Y154, T209, and H327 contribute to the substrate site; that span reads RQAGR.

It belongs to the uroporphyrinogen decarboxylase family. Homodimer.

Its subcellular location is the cytoplasm. It catalyses the reaction uroporphyrinogen III + 4 H(+) = coproporphyrinogen III + 4 CO2. It functions in the pathway porphyrin-containing compound metabolism; protoporphyrin-IX biosynthesis; coproporphyrinogen-III from 5-aminolevulinate: step 4/4. Catalyzes the decarboxylation of four acetate groups of uroporphyrinogen-III to yield coproporphyrinogen-III. In Escherichia coli O157:H7, this protein is Uroporphyrinogen decarboxylase.